An 839-amino-acid chain; its full sequence is AMP deaminase (839 aa).

Residues 8–28 (LALAALFGASFVAVSGFFMHF) form a helical membrane-spanning segment. The disordered stretch occupies residues 40-167 (ERKENPDGDE…DDDDNLTNSE (128 aa)). Residues 85-94 (DGGGGGGGDT) show a composition bias toward gly residues. Phosphoserine occurs at positions 134 and 140. The span at 153-162 (SVEESDDDDN) shows a compositional bias: acidic residues. Position 203 is a phosphoserine (Ser-203). 289–296 (AHYPQGKS) provides a ligand contact to ATP. Residues His-391 and His-393 each contribute to the Zn(2+) site. Substrate is bound by residues His-393 and 462–467 (KFNLKY). A Zn(2+)-binding site is contributed by His-659. Substrate is bound at residue Glu-662. Catalysis depends on His-681, which acts as the Proton acceptor. Residue Asp-736 participates in Zn(2+) binding. Position 737–740 (737–740 (DPLQ)) interacts with substrate.

This sequence belongs to the metallo-dependent hydrolases superfamily. Adenosine and AMP deaminases family. Homodimer. Interacts with AHK4. Interacts with EER5. Zn(2+) is required as a cofactor. In terms of tissue distribution, expressed in seedlings, roots, leaves, flowers, pollen grains, pollen tubes and siliques, and at a lower level in stems.

It localises to the membrane. The protein localises to the microsome membrane. The enzyme catalyses AMP + H2O + H(+) = IMP + NH4(+). It participates in purine metabolism; IMP biosynthesis via salvage pathway; IMP from AMP: step 1/1. Its activity is regulated as follows. Activated by ATP. Activated by sulfate ions (in vitro). Inhibited by phosphate ions. AMP deaminase plays a critical role in energy metabolism. Essential for the transition from zygote to embryo. In Arabidopsis thaliana (Mouse-ear cress), this protein is AMP deaminase.